Reading from the N-terminus, the 378-residue chain is Deoxyguanosinetriphosphate triphosphohydrolase-like protein (378 aa).

Positions Arg62–Asn198 constitute an HD domain.

The protein belongs to the dGTPase family. Type 2 subfamily.

This is Deoxyguanosinetriphosphate triphosphohydrolase-like protein from Paracoccus denitrificans (strain Pd 1222).